We begin with the raw amino-acid sequence, 201 residues long: Dephospho-CoA kinase (201 aa).

The region spanning 2–201 is the DPCK domain; the sequence is MIGLTGGIAS…KRWKVIPEDQ (200 aa). Position 10-15 (10-15) interacts with ATP; the sequence is ASGKSS.

Belongs to the CoaE family.

The protein localises to the cytoplasm. It carries out the reaction 3'-dephospho-CoA + ATP = ADP + CoA + H(+). It participates in cofactor biosynthesis; coenzyme A biosynthesis; CoA from (R)-pantothenate: step 5/5. In terms of biological role, catalyzes the phosphorylation of the 3'-hydroxyl group of dephosphocoenzyme A to form coenzyme A. The protein is Dephospho-CoA kinase of Halalkalibacterium halodurans (strain ATCC BAA-125 / DSM 18197 / FERM 7344 / JCM 9153 / C-125) (Bacillus halodurans).